The following is a 705-amino-acid chain: Tyrosine decarboxylase (705 aa).

A compositionally biased stretch (polar residues) spans 22-32 (RIRNSLSPSRP). The tract at residues 22–81 (RIRNSLSPSRPSMSEATATGSSSSSRASTTIPSTPNMDVTPTVEDPRQNDNNASGMTRDE) is disordered. The span at 33-55 (SMSEATATGSSSSSRASTTIPST) shows a compositional bias: low complexity. The residue at position 380 (K380) is an N6-(pyridoxal phosphate)lysine. A coiled-coil region spans residues 554-620 (VKAVIAEEDE…AQKQHESLAK (67 aa)). A compositionally biased stretch (polar residues) spans 667 to 678 (HSQRPNRLSQSP). Positions 667–687 (HSQRPNRLSQSPGSAGSAFFD) are disordered.

Belongs to the group II decarboxylase family. Requires pyridoxal 5'-phosphate as cofactor. In terms of tissue distribution, expressed in the gonadal sheath projections in between the oocytes, in head RIM motor neurons and RIC interneurons.

The protein resides in the cytoplasm. It localises to the cell projection. It is found in the axon. The protein localises to the perikaryon. It catalyses the reaction L-tyrosine + H(+) = tyramine + CO2. In terms of biological role, required for the decarboxylation of tyrosine to tyramine, a precursor of octopamine but probably also itself a neurotransmitter. Involved in the regulation of egg laying, which is inhibited by tyramine. Also involved in controlling locomotion and head movements. Due to its involvement in octopamine biosynthesis, also required for crtc-1-dependent regulation of AMPK-mediated longevity which requires octopamine signaling. This is Tyrosine decarboxylase from Caenorhabditis elegans.